The following is a 113-amino-acid chain: Na(+)/H(+) antiporter subunit C1 (113 aa).

Helical transmembrane passes span 1-21, 28-48, and 72-92; these read MEII…YLVL, IVMG…TMGG, and LILT…VLAF.

Belongs to the CPA3 antiporters (TC 2.A.63) subunit C family. As to quaternary structure, may form a heterooligomeric complex that consists of seven subunits: mnhA1, mnhB1, mnhC1, mnhD1, mnhE1, mnhF1 and mnhG1.

Its subcellular location is the cell membrane. In terms of biological role, mnh complex is a Na(+)/H(+) antiporter involved in Na(+) excretion. The chain is Na(+)/H(+) antiporter subunit C1 (mnhC1) from Staphylococcus aureus (strain JH1).